Consider the following 387-residue polypeptide: F-box only protein 4 (387 aa).

Residues Ser-12 and Ser-48 each carry the phosphoserine modification. The region spanning 56–102 (ASTLTRLPIDVQLYILSFLSPHDLCQLGSTNHYWNETVRDPILWRYF) is the F-box domain.

In terms of assembly, homodimer. Part of the SCF (SKP1-CUL1-F-box) E3 ubiquitin-protein ligase complex SCF(FBXO4) formed of CUL1, SKP1, RBX1 and FBXO4. Interacts with TERF1; this interaction is prevented in the presence of GNL3L. Identified in a complex with CRYAB and CCND1. Post-translationally, phosphorylation at Ser-12 varies during the cell cycle. It is low in resting cells and high in the S phase and the G2/M phase of the cell cycle. Phosphorylation is decreased during late G1 phase. Phosphorylation at Ser-12 promotes homodimerization and is necessary for optimal ubiquitin ligase activity towards CCND1.

The protein resides in the cytoplasm. It functions in the pathway protein modification; protein ubiquitination. Functionally, substrate recognition component of a SCF (SKP1-CUL1-F-box protein) E3 ubiquitin-protein ligase complex that mediates the ubiquitination and subsequent proteasomal degradation of target proteins. Promotes ubiquitination of cyclin-D1 (CCND1) and its subsequent proteasomal degradation. However, it does not act as a major regulator of CCND1 stability during the G1/S transition. Recognizes TERF1 and promotes its ubiquitination together with UBE2D1. Promotes ubiquitination of FXR1 following phosphorylation of FXR1 by GSK3B, leading to FXR1 degradation by the proteasome. This chain is F-box only protein 4 (FBXO4), found in Homo sapiens (Human).